A 127-amino-acid polypeptide reads, in one-letter code: Major sperm protein 33 (127 aa).

Alanine 2 bears the N-acetylalanine mark. The MSP domain maps to 9–126 (DIQTQPGTKI…RRKNLPIEYN (118 aa)).

Sperm.

The protein localises to the cell projection. The protein resides in the pseudopodium. It is found in the cytoplasm. Its subcellular location is the cytoskeleton. Functionally, central component in molecular interactions underlying sperm crawling. Forms an extensive filament system that extends from sperm villipoda, along the leading edge of the pseudopod. This Caenorhabditis elegans protein is Major sperm protein 33 (msp-33).